The sequence spans 1501 residues: Ribulose bisphosphate carboxylase (1501 aa).

N111 contributes to the substrate binding site. K166 acts as the Proton acceptor in catalysis. Residue K168 coordinates substrate. The Mg(2+) site is built by K191, D193, and E194. K191 carries the post-translational modification N6-carboxylysine. The Proton acceptor role is filled by H287. Substrate is bound by residues R288, H321, and S368. Positions S486 to A508 are cleaved as a propeptide — linker. N619 lines the substrate pocket. Catalysis depends on K674, which acts as the Proton acceptor. K676 contacts substrate. 3 residues coordinate Mg(2+): K699, D701, and E702. The residue at position 699 (K699) is an N6-carboxylysine. H795 acts as the Proton acceptor in catalysis. Substrate contacts are provided by R796, H829, and S876. A propeptide spans S994–A1016 (linker). N1127 is a binding site for substrate. K1182 serves as the catalytic Proton acceptor. K1184 contributes to the substrate binding site. 3 residues coordinate Mg(2+): K1207, D1209, and E1210. Residue K1207 is modified to N6-carboxylysine. Catalysis depends on H1303, which acts as the Proton acceptor. Substrate is bound by residues R1304, H1337, and S1384.

It belongs to the RuBisCO large chain family. Type II subfamily. In terms of assembly, homodimer. Requires Mg(2+) as cofactor.

It localises to the plastid. The protein resides in the chloroplast. It catalyses the reaction 2 (2R)-3-phosphoglycerate + 2 H(+) = D-ribulose 1,5-bisphosphate + CO2 + H2O. The catalysed reaction is D-ribulose 1,5-bisphosphate + O2 = 2-phosphoglycolate + (2R)-3-phosphoglycerate + 2 H(+). In terms of biological role, ruBisCO catalyzes two reactions: the carboxylation of D-ribulose 1,5-bisphosphate, the primary event in carbon dioxide fixation, as well as the oxidative fragmentation of the pentose substrate. Both reactions occur simultaneously and in competition at the same active site. This is Ribulose bisphosphate carboxylase (rbcL) from Symbiodinium sp. (Dinoflagellate).